We begin with the raw amino-acid sequence, 159 residues long: SsrA-binding protein (159 aa).

Residues 140–150 (RATEKERDWNR) are compositionally biased toward basic and acidic residues. A disordered region spans residues 140–159 (RATEKERDWNRQKQRVLRQR).

Belongs to the SmpB family.

It is found in the cytoplasm. Its function is as follows. Required for rescue of stalled ribosomes mediated by trans-translation. Binds to transfer-messenger RNA (tmRNA), required for stable association of tmRNA with ribosomes. tmRNA and SmpB together mimic tRNA shape, replacing the anticodon stem-loop with SmpB. tmRNA is encoded by the ssrA gene; the 2 termini fold to resemble tRNA(Ala) and it encodes a 'tag peptide', a short internal open reading frame. During trans-translation Ala-aminoacylated tmRNA acts like a tRNA, entering the A-site of stalled ribosomes, displacing the stalled mRNA. The ribosome then switches to translate the ORF on the tmRNA; the nascent peptide is terminated with the 'tag peptide' encoded by the tmRNA and targeted for degradation. The ribosome is freed to recommence translation, which seems to be the essential function of trans-translation. The chain is SsrA-binding protein from Alcanivorax borkumensis (strain ATCC 700651 / DSM 11573 / NCIMB 13689 / SK2).